An 89-amino-acid chain; its full sequence is Small ribosomal subunit protein uS15 (89 aa).

Belongs to the universal ribosomal protein uS15 family. Part of the 30S ribosomal subunit. Forms a bridge to the 50S subunit in the 70S ribosome, contacting the 23S rRNA.

Functionally, one of the primary rRNA binding proteins, it binds directly to 16S rRNA where it helps nucleate assembly of the platform of the 30S subunit by binding and bridging several RNA helices of the 16S rRNA. Forms an intersubunit bridge (bridge B4) with the 23S rRNA of the 50S subunit in the ribosome. This is Small ribosomal subunit protein uS15 from Cereibacter sphaeroides (strain ATCC 17023 / DSM 158 / JCM 6121 / CCUG 31486 / LMG 2827 / NBRC 12203 / NCIMB 8253 / ATH 2.4.1.) (Rhodobacter sphaeroides).